The following is a 166-amino-acid chain: Packaging efficiency factor P6 (166 aa).

A disordered region spans residues 134–166 (ILPESAGDQQEAEPVPSVGDQQETAPRKRFRAI).

As to quaternary structure, heterodimer of P6 and P9; further multimerizes as hexamers of heterodimers. Part of the dodecameric portal complex that is composed of the packaging efficiency factor P6, the DNA packaging ATPase P9, and the internal heterododecamer P20/P22 which spans the virion inner membrane.

It localises to the virion. Together with the packaging ATPase P9, forms the external part of the portal vertex that is embeded in the capsid and which plays critical roles in genome packaging and genome ejection. Both proteins multimerize as a single ring-shaped heterdodecamer arranged around a central channel. This is Packaging efficiency factor P6 (VI) from Acinetobacter calcoaceticus (Arthrobacter siderocapsulatus).